The chain runs to 431 residues: Forkhead box protein N2 (431 aa).

A DNA-binding region (fork-head) is located at residues 112-208 (KPPYSFSLLI…QALKKQPFSS (97 aa)). Positions 364 to 387 (DSGYASQPCAKISEKGQSGKKMRK) are disordered.

It localises to the nucleus. In terms of biological role, binds to the purine-rich region in HTLV-I LTR. The polypeptide is Forkhead box protein N2 (FOXN2) (Homo sapiens (Human)).